Here is an 870-residue protein sequence, read N- to C-terminus: DNA mismatch repair protein MutS (870 aa).

Residue 608–615 (GPNMAGKS) participates in ATP binding.

The protein belongs to the DNA mismatch repair MutS family.

Functionally, this protein is involved in the repair of mismatches in DNA. It is possible that it carries out the mismatch recognition step. This protein has a weak ATPase activity. The protein is DNA mismatch repair protein MutS of Persephonella marina (strain DSM 14350 / EX-H1).